Reading from the N-terminus, the 645-residue chain is Zinc finger and SCAN domain-containing protein 2 (645 aa).

Disordered regions lie at residues 1–25 (MMAA…EEDR), 37–75 (DDSW…GPQG), and 193–230 (EMPE…HGEV). An SCAN box domain is found at 59-132 (SAGKGSPQEE…ALVEDLTQTL (74 aa)). Basic and acidic residues predominate over residues 199–214 (SAQHSDGESDFERDAG). 14 C2H2-type zinc fingers span residues 253–275 (YECP…ERTH), 281–303 (YKCD…QTTH), 309–331 (YKCR…QRIH), 337–359 (FQCA…QRTH), 365–387 (YSCP…QGIH), 393–415 (YECK…QRIH), 421–443 (YKCT…RRTH), 449–471 (YQCS…RRTH), 477–499 (YKCG…QGMH), 505–527 (YECL…QRIH), 533–555 (YKCS…QQTH), 561–583 (YKCL…QRAH), 589–611 (YRCP…QRIH), and 617–639 (YKCP…QRTH).

Belongs to the krueppel C2H2-type zinc-finger protein family.

The protein localises to the nucleus. Its function is as follows. May be involved in transcriptional regulation during the post-meiotic stages of spermatogenesis. This is Zinc finger and SCAN domain-containing protein 2 (ZSCAN2) from Pongo abelii (Sumatran orangutan).